The chain runs to 223 residues: Endonuclease V (223 aa).

Mg(2+) is bound by residues Asp-44 and Asp-109.

It belongs to the endonuclease V family. It depends on Mg(2+) as a cofactor.

It localises to the cytoplasm. It catalyses the reaction Endonucleolytic cleavage at apurinic or apyrimidinic sites to products with a 5'-phosphate.. Its function is as follows. DNA repair enzyme involved in the repair of deaminated bases. Selectively cleaves double-stranded DNA at the second phosphodiester bond 3' to a deoxyinosine leaving behind the intact lesion on the nicked DNA. The chain is Endonuclease V from Methanothrix thermoacetophila (strain DSM 6194 / JCM 14653 / NBRC 101360 / PT) (Methanosaeta thermophila).